The following is a 132-amino-acid chain: Sirohydrochlorin cobaltochelatase (132 aa).

Residue His10 is the Proton acceptor of the active site. His10 is a binding site for Co(2+). Residues Arg46 and 69–74 (ISYGLH) each bind substrate. His74 serves as a coordination point for Co(2+).

Belongs to the CbiX family. CbiXS subfamily. Homotetramer; dimer of dimers.

The enzyme catalyses Co-sirohydrochlorin + 2 H(+) = sirohydrochlorin + Co(2+). Its pathway is cofactor biosynthesis; adenosylcobalamin biosynthesis; cob(II)yrinate a,c-diamide from sirohydrochlorin (anaerobic route): step 1/10. Catalyzes the insertion of Co(2+) into sirohydrochlorin as part of the anaerobic pathway to cobalamin biosynthesis. The chain is Sirohydrochlorin cobaltochelatase from Archaeoglobus fulgidus (strain ATCC 49558 / DSM 4304 / JCM 9628 / NBRC 100126 / VC-16).